The chain runs to 66 residues: Gallinacin-8 (66 aa).

An N-terminal signal peptide occupies residues 1-19 (MKILYLLLAVLLTVLQSSL). Positions 20–25 (GFMRVP) are excised as a propeptide. Disulfide bonds link Cys31-Cys60, Cys38-Cys54, and Cys43-Cys61.

The protein belongs to the beta-defensin family. In terms of tissue distribution, expressed in the liver, kidney, gall bladder, testis, ovary and male and femae reproductive tracts. Expressed in the ovarian stroma and the theca and granulosa layers of the ovarian follicle.

It is found in the secreted. It localises to the cytoplasmic granule. Functionally, has bactericidal activity. The polypeptide is Gallinacin-8 (GAL8) (Gallus gallus (Chicken)).